A 231-amino-acid polypeptide reads, in one-letter code: NADH-ubiquinone oxidoreductase chain 4 (231 aa).

Helical transmembrane passes span 1–21 (PIAG…YGMI), 34–54 (MFIP…LTCL), 62–82 (LIAY…SIQT), 86–106 (LSGA…LFCL), 118–138 (ILIL…WWLL), 169–189 (TIIL…HIFL), and 211–231 (LLMT…ELVM).

This sequence belongs to the complex I subunit 4 family.

It localises to the mitochondrion membrane. The catalysed reaction is a ubiquinone + NADH + 5 H(+)(in) = a ubiquinol + NAD(+) + 4 H(+)(out). Its function is as follows. Core subunit of the mitochondrial membrane respiratory chain NADH dehydrogenase (Complex I) that is believed to belong to the minimal assembly required for catalysis. Complex I functions in the transfer of electrons from NADH to the respiratory chain. The immediate electron acceptor for the enzyme is believed to be ubiquinone. The sequence is that of NADH-ubiquinone oxidoreductase chain 4 (MT-ND4) from Causus rhombeatus (Rhombic night adder).